The chain runs to 345 residues: Dihydroorotase (345 aa).

Zn(2+) is bound by residues histidine 14 and histidine 16. Residues 16-18 and asparagine 42 each bind substrate; that span reads HLR. Lysine 102, histidine 139, and histidine 177 together coordinate Zn(2+). Residue lysine 102 is modified to N6-carboxylysine. Histidine 139 serves as a coordination point for substrate. Position 222 (leucine 222) interacts with substrate. Aspartate 250 contacts Zn(2+). The active site involves aspartate 250. 2 residues coordinate substrate: histidine 254 and alanine 266.

The protein belongs to the metallo-dependent hydrolases superfamily. DHOase family. Class II DHOase subfamily. As to quaternary structure, homodimer. The cofactor is Zn(2+).

The enzyme catalyses (S)-dihydroorotate + H2O = N-carbamoyl-L-aspartate + H(+). It participates in pyrimidine metabolism; UMP biosynthesis via de novo pathway; (S)-dihydroorotate from bicarbonate: step 3/3. Its function is as follows. Catalyzes the reversible cyclization of carbamoyl aspartate to dihydroorotate. The chain is Dihydroorotase from Nitrosomonas eutropha (strain DSM 101675 / C91 / Nm57).